A 144-amino-acid polypeptide reads, in one-letter code: uncharacterized protein (144 aa).

The next 4 membrane-spanning stretches (helical) occupy residues 27–47 (VVCALAELVGVLLIDIDIPDI), 49–69 (LLPIDILAIDDIVDANVLLAL), 83–103 (IVLLALDIASMLIDAILDATV), and 106–126 (ALDMASIFMLLPIFIPSILNV).

Its subcellular location is the membrane. This is an uncharacterized protein from Saccharomyces cerevisiae (strain ATCC 204508 / S288c) (Baker's yeast).